We begin with the raw amino-acid sequence, 187 residues long: Elongation factor P (187 aa).

It belongs to the elongation factor P family.

The protein resides in the cytoplasm. The protein operates within protein biosynthesis; polypeptide chain elongation. In terms of biological role, involved in peptide bond synthesis. Stimulates efficient translation and peptide-bond synthesis on native or reconstituted 70S ribosomes in vitro. Probably functions indirectly by altering the affinity of the ribosome for aminoacyl-tRNA, thus increasing their reactivity as acceptors for peptidyl transferase. In Mycolicibacterium smegmatis (strain ATCC 700084 / mc(2)155) (Mycobacterium smegmatis), this protein is Elongation factor P.